Consider the following 119-residue polypeptide: Protein FAM24A-like (119 aa).

Residues 1-40 (MYKPFDLRTIITIIIGCGILTAMFLLIGLVLCLYSKISKA) form the signal peptide.

The protein belongs to the FAM24 family.

It localises to the secreted. The sequence is that of Protein FAM24A-like from Mus musculus (Mouse).